The sequence spans 465 residues: MAGSSGVIVQVIGPVLDIRFENGILPDIYNAIKIPADSGTVTAEVMQHLGNDTVRCVAMSSTDGLVRGMKAEDTGDAITVPVGKEVLGRIFNVLGEPVDKAGPVEPTAYLPIHREAPSLEEQRPSTEILETGIKVVDLLAPYAKGGKIGLFGGAGVGKTVLIMELIRNIATEHGGYSIFTGVGERTREGNDLWHDMNDSGVIEKTAMVFGQMNEPPGARMRVGLTGLTMAEYFRDQMGQDVLLFIDNIFRFVQAGSEVSALLGRIPSAVGYQPTLATDVGALQERIASTNKGSITSVQAVYVPADDLTDPAPATTFAHLDATTVLSRDIVAMGIYPAVDPLESTSRILDPKVVGEEHYTIARKVQEILQRNKELQDIIAILGMDELPEEDKLTVFRARKIQRYLSQPFFVGEQFTGYKGKYVPIKETIRGFKEIIDGKMDNISEAAFYMKGTIEEVYEAAKEMEG.

ATP is bound at residue 152–159 (GGAGVGKT).

This sequence belongs to the ATPase alpha/beta chains family. In terms of assembly, F-type ATPases have 2 components, CF(1) - the catalytic core - and CF(0) - the membrane proton channel. CF(1) has five subunits: alpha(3), beta(3), gamma(1), delta(1), epsilon(1). CF(0) has three main subunits: a(1), b(2) and c(9-12). The alpha and beta chains form an alternating ring which encloses part of the gamma chain. CF(1) is attached to CF(0) by a central stalk formed by the gamma and epsilon chains, while a peripheral stalk is formed by the delta and b chains.

The protein localises to the cell membrane. It carries out the reaction ATP + H2O + 4 H(+)(in) = ADP + phosphate + 5 H(+)(out). In terms of biological role, produces ATP from ADP in the presence of a proton gradient across the membrane. The catalytic sites are hosted primarily by the beta subunits. This is ATP synthase subunit beta from Ruminiclostridium cellulolyticum (strain ATCC 35319 / DSM 5812 / JCM 6584 / H10) (Clostridium cellulolyticum).